Consider the following 503-residue polypeptide: ATP synthase subunit alpha, chloroplastic (503 aa).

170-177 (GDRQTGKT) serves as a coordination point for ATP.

This sequence belongs to the ATPase alpha/beta chains family. As to quaternary structure, F-type ATPases have 2 components, CF(1) - the catalytic core - and CF(0) - the membrane proton channel. CF(1) has five subunits: alpha(3), beta(3), gamma(1), delta(1), epsilon(1). CF(0) has four main subunits: a, b, b' and c.

It localises to the plastid. Its subcellular location is the chloroplast thylakoid membrane. The catalysed reaction is ATP + H2O + 4 H(+)(in) = ADP + phosphate + 5 H(+)(out). Its function is as follows. Produces ATP from ADP in the presence of a proton gradient across the membrane. The alpha chain is a regulatory subunit. The polypeptide is ATP synthase subunit alpha, chloroplastic (Trieres chinensis (Marine centric diatom)).